The chain runs to 148 residues: MSVLKEFKAFAVKGNVVDMAVGIIIGAAFGKIVSSFVGDVIMPPLGLLIGGVDFSDLAVTLRPAQGTAPAVLLAYGKFIQTVIDFIIVAFAIFMGVKAINRLKREEAKAPTLPPTPSKQEILLGEIRDLLKEQSKPAAPITVDPARTL.

Helical transmembrane passes span 9-29 (AFAV…GAAF) and 79-99 (IQTV…VKAI).

This sequence belongs to the MscL family. Homopentamer.

The protein localises to the cell inner membrane. Channel that opens in response to stretch forces in the membrane lipid bilayer. May participate in the regulation of osmotic pressure changes within the cell. The chain is Large-conductance mechanosensitive channel from Pseudomonas syringae pv. syringae (strain B728a).